The primary structure comprises 73 residues: Antimicrobial peptide 143 (73 aa).

The first 22 residues, 1–22 (MKVKCLLAVFLIVLIAAEHCQA), serve as a signal peptide directing secretion. A Lysine amide modification is found at Lys-38. The propeptide occupies 44–73 (ELGTQFRPQQKNFMRREIDLERLFAEMPDY).

This sequence belongs to the non-disulfide-bridged peptide (NDBP) superfamily. Short antimicrobial peptide (group 4) family. As to expression, expressed by the venom gland.

It is found in the secreted. The protein resides in the target cell membrane. Functionally, cationic host defense peptide that have antibacterial activity by breaking membranes. Is more effective on Gram-positive than on Gram-negative bacteria. The sequence is that of Antimicrobial peptide 143 from Lychas mucronatus (Chinese swimming scorpion).